Consider the following 501-residue polypeptide: Aldehyde dehydrogenase 1A1 (501 aa).

N-acetylserine is present on Ser-2. An N6-acetyllysine mark is found at Lys-91 and Lys-128. NAD(+)-binding positions include 167 to 170 (LPWN), 193 to 196 (KPAE), 226 to 227 (GP), and 246 to 247 (GS). Residue Lys-252 is modified to N6-acetyllysine. Residue Glu-269 is the Proton acceptor of the active site. 269 to 271 (ELG) lines the NAD(+) pocket. The active-site Nucleophile is the Cys-303. The interval 336 to 501 (LTPGVSQGPQ…VTVKISQKNS (166 aa)) is mediates interaction with PRMT3. A Phosphothreonine modification is found at Thr-337. 349–353 (EQYDK) is an NAD(+) binding site. Residues Lys-353 and Lys-367 each carry the N6-acetyllysine modification. 400–402 (EIF) is an NAD(+) binding site. N6-acetyllysine is present on Lys-410. Residue Ser-413 is modified to Phosphoserine. N6-acetyllysine is present on residues Lys-419, Lys-435, and Lys-495.

Belongs to the aldehyde dehydrogenase family. As to quaternary structure, homotetramer. Interacts with PRMT3; the interaction is direct, inhibits ALDH1A1 aldehyde dehydrogenase activity and is independent of the methyltransferase activity of PRMT3. The N-terminus is blocked most probably by acetylation.

Its subcellular location is the cytoplasm. The protein localises to the cytosol. It is found in the cell projection. It localises to the axon. The enzyme catalyses an aldehyde + NAD(+) + H2O = a carboxylate + NADH + 2 H(+). The catalysed reaction is all-trans-retinal + NAD(+) + H2O = all-trans-retinoate + NADH + 2 H(+). It catalyses the reaction 9-cis-retinal + NAD(+) + H2O = 9-cis-retinoate + NADH + 2 H(+). It carries out the reaction 11-cis-retinal + NAD(+) + H2O = 11-cis-retinoate + NADH + 2 H(+). The enzyme catalyses 13-cis-retinal + NAD(+) + H2O = 13-cis-retinoate + NADH + 2 H(+). The catalysed reaction is 3-deoxyglucosone + NAD(+) + H2O = 2-dehydro-3-deoxy-D-gluconate + NADH + 2 H(+). It catalyses the reaction (E)-4-hydroxynon-2-enal + NAD(+) + H2O = (E)-4-hydroxynon-2-enoate + NADH + 2 H(+). It carries out the reaction malonaldehyde + NAD(+) + H2O = 3-oxopropanoate + NADH + 2 H(+). The enzyme catalyses hexanal + NAD(+) + H2O = hexanoate + NADH + 2 H(+). The catalysed reaction is propanal + NAD(+) + H2O = propanoate + NADH + 2 H(+). It catalyses the reaction acetaldehyde + NAD(+) + H2O = acetate + NADH + 2 H(+). It carries out the reaction benzaldehyde + NAD(+) + H2O = benzoate + NADH + 2 H(+). The enzyme catalyses 4-aminobutanal + NAD(+) + H2O = 4-aminobutanoate + NADH + 2 H(+). The protein operates within cofactor metabolism; retinol metabolism. Functionally, cytosolic dehydrogenase that catalyzes the irreversible oxidation of a wide range of aldehydes to their corresponding carboxylic acid. Functions downstream of retinol dehydrogenases and catalyzes the oxidation of retinaldehyde into retinoic acid, the second step in the oxidation of retinol/vitamin A into retinoic acid. This pathway is crucial to control the levels of retinol and retinoic acid, two important molecules which excess can be teratogenic and cytotoxic. Also oxidizes aldehydes resulting from lipid peroxidation like (E)-4-hydroxynon-2-enal/HNE, malonaldehyde and hexanal that form protein adducts and are highly cytotoxic. By participating for instance to the clearance of (E)-4-hydroxynon-2-enal/HNE in the lens epithelium prevents the formation of HNE-protein adducts and lens opacification. Also functions downstream of fructosamine-3-kinase in the fructosamine degradation pathway by catalyzing the oxidation of 3-deoxyglucosone, the carbohydrate product of fructosamine 3-phosphate decomposition, which is itself a potent glycating agent that may react with lysine and arginine side-chains of proteins. Also has an aminobutyraldehyde dehydrogenase activity and is probably part of an alternative pathway for the biosynthesis of GABA/4-aminobutanoate in midbrain, thereby playing a role in GABAergic synaptic transmission. In Equus caballus (Horse), this protein is Aldehyde dehydrogenase 1A1.